The sequence spans 664 residues: UvrABC system protein B (664 aa).

The region spanning 25 to 182 (KSFGEGKNKI…RKFLHIQYAR (158 aa)) is the Helicase ATP-binding domain. Position 38 to 45 (38 to 45 (GVTGSGKT)) interacts with ATP. The Beta-hairpin signature appears at 91–114 (YYDYYQPEAYVPSSDTFIEKDMSM). The region spanning 429–595 (QIEDLLNEIR…TIQKEIHDIL (167 aa)) is the Helicase C-terminal domain. A UVR domain is found at 625-660 (DKLREALKREMLRYANDMDFEKAAMFRDKMLALGPD).

Belongs to the UvrB family. In terms of assembly, forms a heterotetramer with UvrA during the search for lesions. Interacts with UvrC in an incision complex.

The protein localises to the cytoplasm. Its function is as follows. The UvrABC repair system catalyzes the recognition and processing of DNA lesions. A damage recognition complex composed of 2 UvrA and 2 UvrB subunits scans DNA for abnormalities. Upon binding of the UvrA(2)B(2) complex to a putative damaged site, the DNA wraps around one UvrB monomer. DNA wrap is dependent on ATP binding by UvrB and probably causes local melting of the DNA helix, facilitating insertion of UvrB beta-hairpin between the DNA strands. Then UvrB probes one DNA strand for the presence of a lesion. If a lesion is found the UvrA subunits dissociate and the UvrB-DNA preincision complex is formed. This complex is subsequently bound by UvrC and the second UvrB is released. If no lesion is found, the DNA wraps around the other UvrB subunit that will check the other stand for damage. The sequence is that of UvrABC system protein B from Leptospira biflexa serovar Patoc (strain Patoc 1 / Ames).